Reading from the N-terminus, the 654-residue chain is Peptide-N(4)-(N-acetyl-beta-glucosaminyl)asparagine amidase (654 aa).

Position 2 is an N-acetylalanine (A2). Residues 30 to 91 (EASKLLLTYA…EGETHLIFPK (62 aa)) enclose the PUB domain. Residues 112-123 (RLDGSNKSHKVE) show a composition bias toward basic and acidic residues. The interval 112–167 (RLDGSNKSHKVESSQQPAASTQLPTTPSSNPSGLNQHTRNRQGQSPDPPSASTVTP) is disordered. Polar residues predominate over residues 124 to 167 (SSQQPAASTQLPTTPSSNPSGLNQHTRNRQGQSPDPPSASTVTP). At T137 the chain carries Phosphothreonine. Positions 250, 253, 283, and 286 each coordinate Zn(2+). C309 (nucleophile) is an active-site residue. Active-site residues include H336 and D353. The PAW domain maps to 454 to 654 (ELGGRISGSV…LEIIIKFSDL (201 aa)).

Belongs to the transglutaminase-like superfamily. PNGase family. As to quaternary structure, component of a complex required to couple retrotranslocation, ubiquitination and deglycosylation composed of NGLY1, SAKS1, AMFR, VCP and RAD23B. Interacts with the proteasome components RAD23B and PSMC1. Interacts with directly with VCP. Interacts with DERL1, bringing it close to the endoplasmic reticulum membrane. Interacts with SAKS1. It depends on Zn(2+) as a cofactor.

Its subcellular location is the cytoplasm. The catalysed reaction is Hydrolysis of an N(4)-(acetyl-beta-D-glucosaminyl)asparagine residue in which the glucosamine residue may be further glycosylated, to yield a (substituted) N-acetyl-beta-D-glucosaminylamine and a peptide containing an aspartate residue.. Its activity is regulated as follows. Inhibited by Z-VAD-fmk, a well-known caspase inhibitor, which inhibits enzyme activity through covalent binding of the carbohydrate to the single Cys-306 residue. Functionally, specifically deglycosylates the denatured form of N-linked glycoproteins in the cytoplasm and assists their proteasome-mediated degradation. Cleaves the beta-aspartyl-glucosamine (GlcNAc) of the glycan and the amide side chain of Asn, converting Asn to Asp. Prefers proteins containing high-mannose over those bearing complex type oligosaccharides. Can recognize misfolded proteins in the endoplasmic reticulum that are exported to the cytosol to be destroyed and deglycosylate them, while it has no activity toward native proteins. Deglycosylation is a prerequisite for subsequent proteasome-mediated degradation of some, but not all, misfolded glycoproteins. In Macaca fascicularis (Crab-eating macaque), this protein is Peptide-N(4)-(N-acetyl-beta-glucosaminyl)asparagine amidase (NGLY1).